Reading from the N-terminus, the 202-residue chain is Na(+)-translocating NADH-quinone reductase subunit E (202 aa).

6 helical membrane passes run 11-31 (SVFI…FLAV), 35-55 (VTTA…SVPA), 79-99 (LSFL…QILE), 114-134 (GIFL…AFMV), 144-164 (LVFG…LAAV), and 180-200 (LGIT…FSGV).

It belongs to the NqrDE/RnfAE family. Composed of six subunits; NqrA, NqrB, NqrC, NqrD, NqrE and NqrF.

The protein resides in the cell inner membrane. It catalyses the reaction a ubiquinone + n Na(+)(in) + NADH + H(+) = a ubiquinol + n Na(+)(out) + NAD(+). NQR complex catalyzes the reduction of ubiquinone-1 to ubiquinol by two successive reactions, coupled with the transport of Na(+) ions from the cytoplasm to the periplasm. NqrA to NqrE are probably involved in the second step, the conversion of ubisemiquinone to ubiquinol. The polypeptide is Na(+)-translocating NADH-quinone reductase subunit E (Shewanella denitrificans (strain OS217 / ATCC BAA-1090 / DSM 15013)).